The chain runs to 797 residues: Peroxisome proliferator-activated receptor gamma coactivator 1-alpha (797 aa).

Lys77 is modified (N6-acetyllysine). Residues 101–138 (EDGLPSFDALTDGAVTTDNEASPSSMPDGTPPPQEAEE) are disordered. Residues 114–127 (AVTTDNEASPSSMP) show a composition bias toward polar residues. The short motif at 142-146 (LKKLL) is the LXXLL motif element. Lys144 carries the N6-acetyllysine modification. Position 177 is a phosphothreonine; by AMPK (Thr177). At Lys183 the chain carries N6-acetyllysine. Positions 212 to 276 (YLTTNDDPPH…NDPKGSPFEN (65 aa)) are disordered. The segment covering 218 to 236 (DPPHTKPTENRNSSRDKCA) has biased composition (basic and acidic residues). The span at 243–259 (TQPQSQHAQAKPTTLSL) shows a compositional bias: polar residues. 8 positions are modified to N6-acetyllysine: Lys253, Lys270, Lys277, Lys320, Lys346, Lys412, Lys441, and Lys450. Positions 289–376 (GTAGLTPPTT…HEERKTKRPS (88 aa)) are disordered. The interval 292–338 (GLTPPTTPPHKANQDNPFKASPKLKPSCKTVVPPPTKRARYSECSGT) is interaction with PPARG. The mediates interaction with RNF34 stretch occupies residues 349–797 (EQSELYAQLS…LKEAQRSLRR (449 aa)). Ser538 carries the post-translational modification Phosphoserine; by AMPK. 3 disordered regions span residues 543-598 (NSPC…SSRS), 612-634 (HRNS…PRYD), and 648-668 (EYRK…ERQK). The span at 562-577 (QRMRSRSRSFSRHRSC) shows a compositional bias: basic residues. Residues 578 to 598 (SRSPYSRSRSRSPGSRSSSRS) show a composition bias toward low complexity. Basic residues predominate over residues 621–630 (SRSRSPYSRR). In terms of domain architecture, RRM spans 676 to 752 (RVIYVGKIRP…TDFELYFCGR (77 aa)). Residues Lys757 and Lys778 each carry the N6-acetyllysine modification.

Homooligomer. Interacts with MYBBP1A; inhibits MYBBP1A transcriptional activation. Interacts with PRDM16, LPIN1 and PML. Interacts (via LXXLL motif) with RORA and RORC (via AF-2 motif); activates RORA and RORC transcriptional activation. Interacts with LRPPRC. Interacts with FOXO1. Interacts with NR5A2. Phosphorylation by AMPK in skeletal muscle increases activation of its own promoter. Phosphorylated by CLK2. In terms of processing, heavily acetylated by KAT2A/GCN5 under conditions of high nutrients, leading to inactivation of PPARGC1A. Deacetylated by SIRT1 in low nutrients/high NAD conditions, leading to its activation. Post-translationally, ubiquitinated. Ubiquitination by RNF34 induces proteasomal degradation. In terms of tissue distribution, white quadriceps and red tibialis anterior (TA) muscles, liver, kidney and brown adipose tissue (at protein level). Skeletal muscle, brown adipose tissue, heart, kidney and brain.

Its subcellular location is the nucleus. It is found in the PML body. In terms of biological role, transcriptional coactivator for steroid receptors and nuclear receptors. Greatly increases the transcriptional activity of PPARG and thyroid hormone receptor on the uncoupling protein promoter. Can regulate key mitochondrial genes that contribute to the program of adaptive thermogenesis. Plays an essential role in metabolic reprogramming in response to dietary availability through coordination of the expression of a wide array of genes involved in glucose and fatty acid metabolism. Acts as a key regulator of gluconeogenesis: stimulates hepatic gluconeogenesis by increasing the expression of gluconeogenic enzymes, and acting together with FOXO1 to promote the fasting gluconeogenic program. Induces the expression of PERM1 in the skeletal muscle in an ESRRA-dependent manner. Also involved in the integration of the circadian rhythms and energy metabolism. Required for oscillatory expression of clock genes, such as BMAL1 and NR1D1, through the coactivation of RORA and RORC, and metabolic genes, such as PDK4 and PEPCK. This is Peroxisome proliferator-activated receptor gamma coactivator 1-alpha (Ppargc1a) from Mus musculus (Mouse).